We begin with the raw amino-acid sequence, 297 residues long: HTH-type transcriptional regulator ArgP (297 aa).

The region spanning 4–60 (PDYRTLQALDAVIRERGFERAAQKLCITQSAVSQRIKQLENMFGQPLLVRTVPPRPT) is the HTH lysR-type domain. Positions 21-40 (FERAAQKLCITQSAVSQRIK) form a DNA-binding region, H-T-H motif.

It belongs to the LysR transcriptional regulatory family. Homodimer.

Functionally, controls the transcription of genes involved in arginine and lysine metabolism. The sequence is that of HTH-type transcriptional regulator ArgP from Citrobacter koseri (strain ATCC BAA-895 / CDC 4225-83 / SGSC4696).